The chain runs to 364 residues: Methylenetetrahydrofolate--tRNA-(uracil-5-)-methyltransferase TrmFO (364 aa).

Residue 11 to 16 (GAGLAG) coordinates FAD. The segment covering 335-352 (SYLNQPCSSANDPTSSLL) has biased composition (polar residues). Residues 335–364 (SYLNQPCSSANDPTSSLLDRSPAQRDIPLQ) are disordered.

It belongs to the MnmG family. TrmFO subfamily. The cofactor is FAD.

It is found in the cytoplasm. It catalyses the reaction uridine(54) in tRNA + (6R)-5,10-methylene-5,6,7,8-tetrahydrofolate + NADH + H(+) = 5-methyluridine(54) in tRNA + (6S)-5,6,7,8-tetrahydrofolate + NAD(+). The catalysed reaction is uridine(54) in tRNA + (6R)-5,10-methylene-5,6,7,8-tetrahydrofolate + NADPH + H(+) = 5-methyluridine(54) in tRNA + (6S)-5,6,7,8-tetrahydrofolate + NADP(+). Catalyzes the folate-dependent formation of 5-methyl-uridine at position 54 (M-5-U54) in all tRNAs. This Prochlorococcus marinus (strain MIT 9313) protein is Methylenetetrahydrofolate--tRNA-(uracil-5-)-methyltransferase TrmFO.